A 66-amino-acid polypeptide reads, in one-letter code: MEHSLNSLNNFDFLARSFARMHAEGRPVDILAVTGNMDEEHRTWFCARYAWYCQQMMQARELELEH.

It belongs to the GlgS family.

Its function is as follows. Major determinant of cell surface composition. Negatively regulates motility, adhesion and synthesis of biofilm exopolysaccharides. This is Surface composition regulator from Shigella flexneri.